The chain runs to 850 residues: Translation initiation factor IF-2 (850 aa).

Disordered stretches follow at residues 50–72 and 92–267; these read LKSS…KTTS and FVQR…TGPV. The span at 96 to 135 shows a compositional bias: basic and acidic residues; that stretch reads SPEEIQAEQKREQEERRAAENAAREKADADARQRNEEQAR. A compositionally biased stretch (low complexity) spans 136–172; sequence RQAAQAPAAAPVAKAEPAPAAAAPAAPAVPDAPVSED. Composition is skewed to basic and acidic residues over residues 173–210 and 234–243; these read AAAR…RGEA and TTDEESDGFR. Residues 244–257 show a composition bias toward basic residues; that stretch reads RGRGGKGKPKKRNQ. Residues 350–517 form the tr-type G domain; it reads SRAPVVTVMG…AVLLQAEILE (168 aa). The G1 stretch occupies residues 359 to 366; that stretch reads GHVDHGKT. Residue 359 to 366 participates in GTP binding; it reads GHVDHGKT. Residues 384-388 are G2; sequence GITQH. A G3 region spans residues 405–408; the sequence is DTPG. GTP contacts are provided by residues 405–409 and 459–462; these read DTPGH and NKID. Residues 459-462 are G4; it reads NKID. The G5 stretch occupies residues 495–497; sequence SAK.

Belongs to the TRAFAC class translation factor GTPase superfamily. Classic translation factor GTPase family. IF-2 subfamily.

The protein resides in the cytoplasm. One of the essential components for the initiation of protein synthesis. Protects formylmethionyl-tRNA from spontaneous hydrolysis and promotes its binding to the 30S ribosomal subunits. Also involved in the hydrolysis of GTP during the formation of the 70S ribosomal complex. In Pseudomonas entomophila (strain L48), this protein is Translation initiation factor IF-2.